Reading from the N-terminus, the 194-residue chain is MKRERLMSINKEKAEAAIYQFLEAIGENPNREGLLDTPKRVAKMYAEMFAGLKKDPKEEFTAVFTEHHEDVVIVKDISFYSMCEHHQVPFYGKAHIAYLPSDGRVTGLSKLARAVEVASKRPQLQERLTAQIADALVEALHPTGVLVLVEAEHMCMTMRGIKKPGSKTITTTARGLYKEDRSERQEVMALMTKV.

Positions 83, 86, and 155 each coordinate Zn(2+).

It belongs to the GTP cyclohydrolase I family. In terms of assembly, toroid-shaped homodecamer, composed of two pentamers of five dimers.

The catalysed reaction is GTP + H2O = 7,8-dihydroneopterin 3'-triphosphate + formate + H(+). It participates in cofactor biosynthesis; 7,8-dihydroneopterin triphosphate biosynthesis; 7,8-dihydroneopterin triphosphate from GTP: step 1/1. This is GTP cyclohydrolase 1 (folE) from Streptococcus pyogenes.